The following is a 1389-amino-acid chain: uncharacterized protein (1389 aa).

Residues 43–94 adopt a coiled-coil conformation; sequence STIAQRVSQLENEVAEINVALAEHVNELNSQEKRIDKLEKTVKKKKSNCSDD. The interval 294 to 353 is disordered; it reads HKNRRSKSDNSDLSEYSSSNSDDSECTDSDGSSCSTDGSPDCTESENTESHRSHGKKKHR. Low complexity-rich tracts occupy residues 304–314 and 322–335; these read SDLSEYSSSNS and SDGSSCSTDGSPDC. WD repeat units follow at residues 867–907, 1017–1056, and 1115–1156; these read TFTD…VKHI, GYNEGLDIKYSPDQTIVVSGYYNTNPLIIYDGPDGLTPSG, and GISN…ILST.

The protein localises to the virion. This is an uncharacterized protein from Acanthamoeba polyphaga (Amoeba).